A 283-amino-acid chain; its full sequence is NAD kinase (283 aa).

Asp67 functions as the Proton acceptor in the catalytic mechanism. Residues 67 to 68, Arg72, 136 to 137, Lys147, Arg164, Asp166, 177 to 182, and Gln236 each bind NAD(+); these read DG, NE, and TAYSMS.

This sequence belongs to the NAD kinase family. Requires a divalent metal cation as cofactor.

Its subcellular location is the cytoplasm. It carries out the reaction NAD(+) + ATP = ADP + NADP(+) + H(+). In terms of biological role, involved in the regulation of the intracellular balance of NAD and NADP, and is a key enzyme in the biosynthesis of NADP. Catalyzes specifically the phosphorylation on 2'-hydroxyl of the adenosine moiety of NAD to yield NADP. The sequence is that of NAD kinase from Methanothermobacter thermautotrophicus (strain ATCC 29096 / DSM 1053 / JCM 10044 / NBRC 100330 / Delta H) (Methanobacterium thermoautotrophicum).